The chain runs to 215 residues: MKYFLDTADVSEIRRLNRLGIVDGVTTNPTIISREGRDFKEVINEICQIVDGPVSAEVTGLTCDEMVTEAREIAKWSPNVVVKIPMTEEGLAAVSQLSKEGIKTNVTLIFTVAQGLSAMKAGATFISPFVGRLEDIGTDAYALIRDLRHIIDFYGFQSEIIAASIRGLAHVEGVAKCGAHIATIPDKTFASLFTHPLTDKGIETFLKDWDSFKKK.

Lys-83 functions as the Schiff-base intermediate with substrate in the catalytic mechanism.

It belongs to the transaldolase family. Type 3B subfamily.

The protein resides in the cytoplasm. It carries out the reaction D-sedoheptulose 7-phosphate + D-glyceraldehyde 3-phosphate = D-erythrose 4-phosphate + beta-D-fructose 6-phosphate. It functions in the pathway carbohydrate degradation; pentose phosphate pathway; D-glyceraldehyde 3-phosphate and beta-D-fructose 6-phosphate from D-ribose 5-phosphate and D-xylulose 5-phosphate (non-oxidative stage): step 2/3. Transaldolase is important for the balance of metabolites in the pentose-phosphate pathway. This chain is Probable transaldolase, found in Streptococcus agalactiae serotype III (strain NEM316).